A 105-amino-acid polypeptide reads, in one-letter code: Nitrogenase-stabilizing/protective protein NifW 1 (105 aa).

This sequence belongs to the NifW family. Homotrimer; associates with NifD.

Functionally, may protect the nitrogenase Fe-Mo protein from oxidative damage. This Trichormus variabilis (strain ATCC 29413 / PCC 7937) (Anabaena variabilis) protein is Nitrogenase-stabilizing/protective protein NifW 1.